The primary structure comprises 167 residues: uncharacterized protein (167 aa).

The tract at residues 95–114 (AHSLHHQSHQSDVQVHAKGN) is disordered.

This is an uncharacterized protein from Haemophilus influenzae (Bacteriophage HP1).